Consider the following 950-residue polypeptide: Translation initiation factor IF-2 (950 aa).

Disordered stretches follow at residues 69–92 and 128–352; these read KTKT…AGKA and KPKV…SNVP. Basic and acidic residues-rich tracts occupy residues 77 to 86, 128 to 158, 165 to 186, 200 to 234, and 291 to 312; these read AKSKQEDHPR, KPKV…EAKA, AEVK…EKKK, KRAE…DNRR, and NRRD…DGNR. Polar residues-rich tracts occupy residues 322 to 336 and 343 to 352; these read NRNQ…NWNQ and YQNNQSSNVP. One can recognise a tr-type G domain in the interval 448–619; the sequence is ERPAVVTIMG…LLVAEVQELK (172 aa). The segment at 457–464 is G1; it reads GHVDHGKT. Position 457 to 464 (457 to 464) interacts with GTP; the sequence is GHVDHGKT. Positions 482–486 are G2; the sequence is GITQH. Positions 503-506 are G3; sequence DTPG. GTP-binding positions include 503-507 and 557-560; these read DTPGH and NKID. Residues 557 to 560 form a G4 region; it reads NKID. The segment at 595–597 is G5; sequence SAK.

Belongs to the TRAFAC class translation factor GTPase superfamily. Classic translation factor GTPase family. IF-2 subfamily.

Its subcellular location is the cytoplasm. Its function is as follows. One of the essential components for the initiation of protein synthesis. Protects formylmethionyl-tRNA from spontaneous hydrolysis and promotes its binding to the 30S ribosomal subunits. Also involved in the hydrolysis of GTP during the formation of the 70S ribosomal complex. The chain is Translation initiation factor IF-2 from Lactococcus lactis subsp. cremoris (strain SK11).